The sequence spans 470 residues: Protein escargot (470 aa).

A disordered region spans residues 271 to 309 (LNLNTSQPGEQAAAKTGDMSPETMPNASAKKDKNQPPRY). 4 C2H2-type zinc fingers span residues 309-331 (YQCP…QQFH), 344-366 (FSCK…IRTH), 370-392 (CKCN…IRTH), and 398-420 (FSCQ…LQTH). Residues 426-449 (YSCTSCSKTFSRMSLLTKHSEGGC) form a C2H2-type 5; atypical zinc finger. The interval 448-470 (GCPGGSAGSSSSSELNYAGYAEP) is disordered.

The protein belongs to the snail C2H2-type zinc-finger protein family. As to expression, expression is complex and dynamic. In early embryogenesis, expression begins on the dorsal side of the embryo. Expressed in a pattern of longitudinal stripes early in germband elongation. Later in embryogenesis, expression is in cells that correspond to the wing, haltere, leg and genital imaginal disks and the abdominal histoblasts. In the embryonic leg disk, expression is restricted to imaginal cells. Also expressed in the central nervous system (CNS), tracheae and head of stage 14 embryos. CNS and tracheal expression decays during later stages, though head expression persists until late in embryogenesis. In third instar larvae, expression is seen in the brain and in regions of many imaginal tissues including the eye-antennal, wing, leg and haltere disks. Expressed in embryonic, larval and adult male germline stem cells and in the somatic cells of the embryonic gonads.

The protein resides in the nucleus. In terms of biological role, transcription factor that can both stimulate and repress transcription. Binds to the consensus DNA sequence 5'-A/GCAGGTG-3'. Regulates cell motility and adhesion during tracheal morphogenesis by stimulating transcription of the DE-cadherin gene shg at branch tips, thereby promoting tracheal tube fusion. Maintains diploidy in imaginal cells by inhibiting the transcription of genes required for endoreplication. Required for development of the genital disk and acts as an intrinsic determinant of wing cell fate. The somatic protein is required for maintenance of male germ cells. Acts with other members of the snail protein family to control embryonic central nervous system development. The sequence is that of Protein escargot (esg) from Drosophila melanogaster (Fruit fly).